Here is a 361-residue protein sequence, read N- to C-terminus: Queuine tRNA-ribosyltransferase (361 aa).

Asp92 functions as the Proton acceptor in the catalytic mechanism. Substrate is bound by residues 92-96 (DSGGF), Asp146, Gln189, and Gly216. Residues 247–253 (GVGKPSD) form an RNA binding region. Catalysis depends on Asp266, which acts as the Nucleophile. The interval 271 to 275 (TRSGR) is RNA binding; important for wobble base 34 recognition. Zn(2+) contacts are provided by Cys304, Cys306, Cys309, and His335.

It belongs to the queuine tRNA-ribosyltransferase family. As to quaternary structure, homodimer. Within each dimer, one monomer is responsible for RNA recognition and catalysis, while the other monomer binds to the replacement base PreQ1. It depends on Zn(2+) as a cofactor.

It catalyses the reaction 7-aminomethyl-7-carbaguanine + guanosine(34) in tRNA = 7-aminomethyl-7-carbaguanosine(34) in tRNA + guanine. The protein operates within tRNA modification; tRNA-queuosine biosynthesis. Its function is as follows. Catalyzes the base-exchange of a guanine (G) residue with the queuine precursor 7-aminomethyl-7-deazaguanine (PreQ1) at position 34 (anticodon wobble position) in tRNAs with GU(N) anticodons (tRNA-Asp, -Asn, -His and -Tyr). Catalysis occurs through a double-displacement mechanism. The nucleophile active site attacks the C1' of nucleotide 34 to detach the guanine base from the RNA, forming a covalent enzyme-RNA intermediate. The proton acceptor active site deprotonates the incoming PreQ1, allowing a nucleophilic attack on the C1' of the ribose to form the product. After dissociation, two additional enzymatic reactions on the tRNA convert PreQ1 to queuine (Q), resulting in the hypermodified nucleoside queuosine (7-(((4,5-cis-dihydroxy-2-cyclopenten-1-yl)amino)methyl)-7-deazaguanosine). In Rickettsia prowazekii (strain Madrid E), this protein is Queuine tRNA-ribosyltransferase.